Reading from the N-terminus, the 509-residue chain is Histidine ammonia-lyase (509 aa).

Residues 144–146 (ASG) constitute a cross-link (5-imidazolinone (Ala-Gly)). A 2,3-didehydroalanine (Ser) modification is found at Ser-145.

Belongs to the PAL/histidase family. Post-translationally, contains an active site 4-methylidene-imidazol-5-one (MIO), which is formed autocatalytically by cyclization and dehydration of residues Ala-Ser-Gly.

It is found in the cytoplasm. The catalysed reaction is L-histidine = trans-urocanate + NH4(+). Its pathway is amino-acid degradation; L-histidine degradation into L-glutamate; N-formimidoyl-L-glutamate from L-histidine: step 1/3. This Pseudoalteromonas atlantica (strain T6c / ATCC BAA-1087) protein is Histidine ammonia-lyase.